An 87-amino-acid polypeptide reads, in one-letter code: Conotoxin Bt15a (87 aa).

The signal sequence occupies residues 1-23 (MEKLTILVLVATVLLAIQVLVQS). A propeptide spanning residues 24–49 (DGEKPLKRRVKQYAAKRLSALMRGPR) is cleaved from the precursor. Gln-50 is modified (pyrrolidone carboxylic acid).

Belongs to the conotoxin O2 superfamily. Contains 4 disulfide bonds. As to expression, expressed by the venom duct.

It is found in the secreted. The sequence is that of Conotoxin Bt15a from Conus betulinus (Beech cone).